The primary structure comprises 238 residues: Ribonuclease PH (238 aa).

Residues R86 and 124-126 (GTR) each bind phosphate.

Belongs to the RNase PH family. As to quaternary structure, homohexameric ring arranged as a trimer of dimers.

The catalysed reaction is tRNA(n+1) + phosphate = tRNA(n) + a ribonucleoside 5'-diphosphate. Phosphorolytic 3'-5' exoribonuclease that plays an important role in tRNA 3'-end maturation. Removes nucleotide residues following the 3'-CCA terminus of tRNAs; can also add nucleotides to the ends of RNA molecules by using nucleoside diphosphates as substrates, but this may not be physiologically important. Probably plays a role in initiation of 16S rRNA degradation (leading to ribosome degradation) during starvation. This chain is Ribonuclease PH, found in Anaeromyxobacter sp. (strain Fw109-5).